A 455-amino-acid polypeptide reads, in one-letter code: Chromosomal replication initiator protein DnaA (455 aa).

Residues 1-73 are domain I, interacts with DnaA modulators; sequence MTISPQYIWN…LEEVETIVGY (73 aa). The tract at residues 73-114 is domain II; that stretch reads YPIAVKLTTSQEQNLRIVDKNKDNLSSTKLQNKRQQESPKLN. The interval 115-331 is domain III, AAA+ region; the sequence is QLNPRYNFSR…GALIRAVTYI (217 aa). Residues Gly-159, Gly-161, Lys-162, and Thr-163 each coordinate ATP. Positions 332-455 are domain IV, binds dsDNA; it reads SISGLSMTVE…RINIASRNQN (124 aa).

The protein belongs to the DnaA family. Oligomerizes as a right-handed, spiral filament on DNA at oriC.

It is found in the cytoplasm. In terms of biological role, plays an essential role in the initiation and regulation of chromosomal replication. ATP-DnaA binds to the origin of replication (oriC) to initiate formation of the DNA replication initiation complex once per cell cycle. Binds the DnaA box (a 9 base pair repeat at the origin) and separates the double-stranded (ds)DNA. Forms a right-handed helical filament on oriC DNA; dsDNA binds to the exterior of the filament while single-stranded (ss)DNA is stabiized in the filament's interior. The ATP-DnaA-oriC complex binds and stabilizes one strand of the AT-rich DNA unwinding element (DUE), permitting loading of DNA polymerase. After initiation quickly degrades to an ADP-DnaA complex that is not apt for DNA replication. Binds acidic phospholipids. This is Chromosomal replication initiator protein DnaA from Crocosphaera subtropica (strain ATCC 51142 / BH68) (Cyanothece sp. (strain ATCC 51142)).